Consider the following 575-residue polypeptide: Kelch repeat and BTB domain-containing protein 8 (575 aa).

Residues 23–91 (TDIVVEVDHG…AYTSRVILTE (69 aa)) enclose the BTB domain. In terms of domain architecture, BACK spans 126–228 (SIGVFIFADH…MEDAFIEKIP (103 aa)). Kelch repeat units follow at residues 310-364 (DIYI…YCCG), 365-415 (KMYA…EHKE), 417-455 (IYVL…VYKD), 457-506 (IYYI…LFQN), and 516-562 (QVTV…FECA).

It belongs to the KBTBD8 family. Component of the BCR(KBTBD8) E3 ubiquitin ligase complex, at least composed of CUL3, KBTBD8 and RBX1.

Its subcellular location is the cytoplasm. It is found in the cytoskeleton. The protein resides in the spindle. It localises to the golgi apparatus. Functionally, substrate-specific adapter of a BCR (BTB-CUL3-RBX1) E3 ubiquitin ligase complex that acts as a regulator of neural crest specification. The BCR(KBTBD8) complex acts by mediating monoubiquitination of NOLC1 and TCOF1: monoubiquitination promotes the formation of a NOLC1-TCOF1 complex that acts as a platform to connect RNA polymerase I with enzymes responsible for ribosomal processing and modification, leading to remodel the translational program of differentiating cells in favor of neural crest specification. In Rattus norvegicus (Rat), this protein is Kelch repeat and BTB domain-containing protein 8.